A 37-amino-acid polypeptide reads, in one-letter code: MKVRASVKKICDKCKIIKRKGVVRVICDTPKHSQRQG.

It belongs to the bacterial ribosomal protein bL36 family.

The sequence is that of Large ribosomal subunit protein bL36 from Trichlorobacter lovleyi (strain ATCC BAA-1151 / DSM 17278 / SZ) (Geobacter lovleyi).